Consider the following 465-residue polypeptide: Histidine--tRNA ligase (465 aa).

Belongs to the class-II aminoacyl-tRNA synthetase family. In terms of assembly, homodimer.

Its subcellular location is the cytoplasm. The catalysed reaction is tRNA(His) + L-histidine + ATP = L-histidyl-tRNA(His) + AMP + diphosphate + H(+). The polypeptide is Histidine--tRNA ligase (hisS) (Pelagibacter ubique (strain HTCC1062)).